The sequence spans 998 residues: Sensor histidine kinase AruS (998 aa).

Disordered regions lie at residues 27-82, 154-198, and 224-245; these read ERRP…HARA, RQAG…LPAG, and RQHP…RQPR. A compositionally biased stretch (low complexity) spans 40–49; it reads GEAAVRRAGL. Positions 161–183 are enriched in basic residues; it reads HRLHRPRTTHRHAVRRAPGRRRE. The next 2 membrane-spanning stretches (helical) occupy residues 264–284 and 395–415; these read VLLF…FFEY and ASLL…SWLF. An HAMP domain is found at 417-473; that stretch reads SLVTRHLWRMSEFAGHIAEGDLQQPLRLDKVDRERDEIDAVAAALEDMRQALRTDRR. The region spanning 513–734 is the Histidine kinase domain; the sequence is TMSHEIRTPL…TFWFEIELAL (222 aa). Position 516 is a phosphohistidine; by autocatalysis (His-516). Residues 751 to 869 form the Response regulatory domain; that stretch reads EVLLVEDVAL…ELRRALGEVG (119 aa). Residue Asp-800 is modified to 4-aspartylphosphate. An HPt domain is found at 894–987; sequence GRHKLAGLLG…RDGAEALRRA (94 aa). Residue His-933 is modified to Phosphohistidine.

In terms of processing, autophosphorylated. Activation may require a sequential transfer of a phosphate group from a His in the primary transmitter domain, to an Asp in the receiver domain and to a His in the secondary transmitter domain.

Its subcellular location is the cell membrane. It carries out the reaction ATP + protein L-histidine = ADP + protein N-phospho-L-histidine.. It functions in the pathway amino-acid degradation; L-arginine degradation [regulation]. Functionally, member of the two-component regulatory system AruS/AruR, which is involved in the regulation of the arginine transaminase (ATA) pathway in response to exogeneous L-arginine. Probably functions as a sensor kinase that phosphorylates AruR. This is Sensor histidine kinase AruS (aruS) from Pseudomonas aeruginosa (strain ATCC 15692 / DSM 22644 / CIP 104116 / JCM 14847 / LMG 12228 / 1C / PRS 101 / PAO1).